The following is a 269-amino-acid chain: Tryptophan synthase alpha chain (269 aa).

Catalysis depends on proton acceptor residues Glu-49 and Asp-60.

This sequence belongs to the TrpA family. Tetramer of two alpha and two beta chains.

The catalysed reaction is (1S,2R)-1-C-(indol-3-yl)glycerol 3-phosphate + L-serine = D-glyceraldehyde 3-phosphate + L-tryptophan + H2O. It functions in the pathway amino-acid biosynthesis; L-tryptophan biosynthesis; L-tryptophan from chorismate: step 5/5. Its function is as follows. The alpha subunit is responsible for the aldol cleavage of indoleglycerol phosphate to indole and glyceraldehyde 3-phosphate. In Enterobacter sp. (strain 638), this protein is Tryptophan synthase alpha chain.